A 412-amino-acid polypeptide reads, in one-letter code: [Pyruvate dehydrogenase (acetyl-transferring)] kinase isozyme 4, mitochondrial (412 aa).

In terms of domain architecture, Histidine kinase spans 138–368 (ILEYKDTCTV…DAIIYLKALS (231 aa)). ATP is bound by residues 254-261 (ELFKNAMR), Asp-293, 312-313 (ST), and 329-334 (GFGYGL).

It belongs to the PDK/BCKDK protein kinase family. As to quaternary structure, homodimer. Interacts with the pyruvate dehydrogenase complex subunit DLAT, and is part of the multimeric pyruvate dehydrogenase complex that contains multiple copies of pyruvate dehydrogenase (E1), dihydrolipoamide acetyltransferase (DLAT, E2) and lipoamide dehydrogenase (DLD, E3). Detected in skeletal muscle and heart.

The protein localises to the mitochondrion matrix. It carries out the reaction L-seryl-[pyruvate dehydrogenase E1 alpha subunit] + ATP = O-phospho-L-seryl-[pyruvate dehydrogenase E1 alpha subunit] + ADP + H(+). Its function is as follows. Kinase that plays a key role in regulation of glucose and fatty acid metabolism and homeostasis via phosphorylation of the pyruvate dehydrogenase subunits PDHA1 and PDHA2. This inhibits pyruvate dehydrogenase activity, and thereby regulates metabolite flux through the tricarboxylic acid cycle, down-regulates aerobic respiration and inhibits the formation of acetyl-coenzyme A from pyruvate. Inhibition of pyruvate dehydrogenase decreases glucose utilization and increases fat metabolism in response to prolonged fasting and starvation. Plays an important role in maintaining normal blood glucose levels under starvation, and is involved in the insulin signaling cascade. Via its regulation of pyruvate dehydrogenase activity, plays an important role in maintaining normal blood pH and in preventing the accumulation of ketone bodies under starvation. In the fed state, mediates cellular responses to glucose levels and to a high-fat diet. Regulates both fatty acid oxidation and de novo fatty acid biosynthesis. Plays a role in the generation of reactive oxygen species. Protects detached epithelial cells against anoikis. Plays a role in cell proliferation via its role in regulating carbohydrate and fatty acid metabolism. The sequence is that of [Pyruvate dehydrogenase (acetyl-transferring)] kinase isozyme 4, mitochondrial (PDK4) from Ictidomys tridecemlineatus (Thirteen-lined ground squirrel).